The following is a 311-amino-acid chain: MPETCPNTVTKRRCAVVTGGNKGIGFEICKQLSSNGIMVVLTCRDVTKGHEAVEKLKNSNHENVVFHQLDVTDPIATMSSLADFIKTHFGKLDILVNNAGVAGFSVDADRFKAMISDIGEDSEELVKIYEKPEAQELMSETYELAEECLKINYNGVKSVTEVLIPLLQLSDSPRIVNVSSSTGSLKYVSNETALEILGDGDALTEERIDMVVNMLLKDFKENLIETNGWPSFGAAYTTSKACLNAYTRVLANKIPKFQVNCVCPGLVKTEMNYGIGNYTAEEGAEHVVRIALFPDDGPSGFFYDCSELSAF.

Residues 21–24 (NKGI), Arg44, 70–71 (DV), and Asn98 contribute to the NADP(+) site. The substrate site is built by Tyr129 and Ser180. NADP(+) is bound by residues Tyr236, Lys240, and 267–272 (VKTEMN). Tyr236 acts as the Proton acceptor in catalysis. Cys263 and Cys305 are disulfide-bonded.

The protein belongs to the short-chain dehydrogenases/reductases (SDR) family.

It carries out the reaction (7S)-salutaridinol + NADP(+) = salutaridine + NADPH + H(+). It functions in the pathway alkaloid biosynthesis; morphine biosynthesis. Strong substrate inhibition. Was thought to be due to mutually exclusive productive and non-productive modes of substrate binding in the active site. Alternatively, SALR may undergo significant conformational changes during catalytic turnover. In terms of biological role, short-chain dehydrogenases/reductases involved in biosynthesis of morphinan-type benzylisoquinoline and opiate alkaloids natural products. Catalyzes specifically the stereospecific conversion of salutaridine to salutaridinol. The protein is Salutaridine reductase of Papaver somniferum (Opium poppy).